The primary structure comprises 433 residues: 5-methylthioadenosine/S-adenosylhomocysteine deaminase (433 aa).

Positions 67 and 69 each coordinate Zn(2+). Substrate contacts are provided by E96, R148, R158, and H186. Residue H213 participates in Zn(2+) binding. Substrate-binding residues include E216 and D301. Residue D301 coordinates Zn(2+).

Belongs to the metallo-dependent hydrolases superfamily. MTA/SAH deaminase family. The cofactor is Zn(2+).

It catalyses the reaction S-adenosyl-L-homocysteine + H2O + H(+) = S-inosyl-L-homocysteine + NH4(+). It carries out the reaction S-methyl-5'-thioadenosine + H2O + H(+) = S-methyl-5'-thioinosine + NH4(+). Functionally, catalyzes the deamination of 5-methylthioadenosine and S-adenosyl-L-homocysteine into 5-methylthioinosine and S-inosyl-L-homocysteine, respectively. Is also able to deaminate adenosine. This is 5-methylthioadenosine/S-adenosylhomocysteine deaminase from Pelotomaculum thermopropionicum (strain DSM 13744 / JCM 10971 / SI).